Consider the following 165-residue polypeptide: Endoribonuclease YbeY (165 aa).

H130, H134, and H140 together coordinate Zn(2+).

It belongs to the endoribonuclease YbeY family. The cofactor is Zn(2+).

The protein localises to the cytoplasm. In terms of biological role, single strand-specific metallo-endoribonuclease involved in late-stage 70S ribosome quality control and in maturation of the 3' terminus of the 16S rRNA. This Streptococcus pneumoniae serotype 4 (strain ATCC BAA-334 / TIGR4) protein is Endoribonuclease YbeY.